The following is a 403-amino-acid chain: Multifunctional CCA protein (403 aa).

Residues G8 and R11 each coordinate ATP. CTP contacts are provided by G8 and R11. D21 and D23 together coordinate Mg(2+). Positions 91, 137, and 140 each coordinate ATP. Residues R91, R137, and R140 each contribute to the CTP site. An HD domain is found at 228 to 329; the sequence is TGIHTLMVAK…LKVLGLLDVW (102 aa).

The protein belongs to the tRNA nucleotidyltransferase/poly(A) polymerase family. Bacterial CCA-adding enzyme type 1 subfamily. In terms of assembly, monomer. Can also form homodimers and oligomers. The cofactor is Mg(2+). Ni(2+) serves as cofactor.

It carries out the reaction a tRNA precursor + 2 CTP + ATP = a tRNA with a 3' CCA end + 3 diphosphate. The enzyme catalyses a tRNA with a 3' CCA end + 2 CTP + ATP = a tRNA with a 3' CCACCA end + 3 diphosphate. Its function is as follows. Catalyzes the addition and repair of the essential 3'-terminal CCA sequence in tRNAs without using a nucleic acid template. Adds these three nucleotides in the order of C, C, and A to the tRNA nucleotide-73, using CTP and ATP as substrates and producing inorganic pyrophosphate. tRNA 3'-terminal CCA addition is required both for tRNA processing and repair. Also involved in tRNA surveillance by mediating tandem CCA addition to generate a CCACCA at the 3' terminus of unstable tRNAs. While stable tRNAs receive only 3'-terminal CCA, unstable tRNAs are marked with CCACCA and rapidly degraded. This chain is Multifunctional CCA protein, found in Vibrio cholerae serotype O1 (strain ATCC 39541 / Classical Ogawa 395 / O395).